We begin with the raw amino-acid sequence, 523 residues long: Protein nucleotidyltransferase YdiU (523 aa).

Gly-101, Gly-103, Arg-104, Lys-128, Asp-140, Gly-141, Arg-198, and Arg-205 together coordinate ATP. Asp-275 serves as the catalytic Proton acceptor. Positions 276 and 285 each coordinate Mg(2+). ATP is bound at residue Asp-285.

Belongs to the SELO family. Mg(2+) serves as cofactor. The cofactor is Mn(2+).

It catalyses the reaction L-seryl-[protein] + ATP = 3-O-(5'-adenylyl)-L-seryl-[protein] + diphosphate. The enzyme catalyses L-threonyl-[protein] + ATP = 3-O-(5'-adenylyl)-L-threonyl-[protein] + diphosphate. It carries out the reaction L-tyrosyl-[protein] + ATP = O-(5'-adenylyl)-L-tyrosyl-[protein] + diphosphate. The catalysed reaction is L-histidyl-[protein] + UTP = N(tele)-(5'-uridylyl)-L-histidyl-[protein] + diphosphate. It catalyses the reaction L-seryl-[protein] + UTP = O-(5'-uridylyl)-L-seryl-[protein] + diphosphate. The enzyme catalyses L-tyrosyl-[protein] + UTP = O-(5'-uridylyl)-L-tyrosyl-[protein] + diphosphate. Functionally, nucleotidyltransferase involved in the post-translational modification of proteins. It can catalyze the addition of adenosine monophosphate (AMP) or uridine monophosphate (UMP) to a protein, resulting in modifications known as AMPylation and UMPylation. This Aromatoleum aromaticum (strain DSM 19018 / LMG 30748 / EbN1) (Azoarcus sp. (strain EbN1)) protein is Protein nucleotidyltransferase YdiU.